Here is a 363-residue protein sequence, read N- to C-terminus: MHVVLAGGGTAGHIEPALALADALRRQDPTVGITALGTERGLETRLVPERGYDLALIPAVPLPRKPTPELITVPGRLRGTIKAAEQILERTKADAVVGFGGYVALPGYLAAKRLGVPIVIHEANARPGLANKIGSRYAAQVAVSTPDSKLRGARYIGIPLRRSIATLDRAAVRPEARAAFGLDPNLPTLLVSGGSQGARRLNEVVQQVAPYLQQAGIQILHAVGPKNEMPQVHQMPGMPPYIPVPYVDRMDLAYAAADMMLCRAGAMTVAELSAVGLPAAYVPLPIGNGEQRLNAQPVVKAGGGLLVDDAELTPEWVQGNVLPVLADPHRLYEMSRAASEFGRRDADDLLVGMVYEAIAARHR.

UDP-N-acetyl-alpha-D-glucosamine is bound by residues 10–12 (TAG), Asn124, Arg161, Ser195, and Gln291.

The protein belongs to the glycosyltransferase 28 family. MurG subfamily.

The protein resides in the cell membrane. The enzyme catalyses di-trans,octa-cis-undecaprenyl diphospho-N-acetyl-alpha-D-muramoyl-L-alanyl-D-glutamyl-meso-2,6-diaminopimeloyl-D-alanyl-D-alanine + UDP-N-acetyl-alpha-D-glucosamine = di-trans,octa-cis-undecaprenyl diphospho-[N-acetyl-alpha-D-glucosaminyl-(1-&gt;4)]-N-acetyl-alpha-D-muramoyl-L-alanyl-D-glutamyl-meso-2,6-diaminopimeloyl-D-alanyl-D-alanine + UDP + H(+). The protein operates within cell wall biogenesis; peptidoglycan biosynthesis. Cell wall formation. Catalyzes the transfer of a GlcNAc subunit on undecaprenyl-pyrophosphoryl-MurNAc-pentapeptide (lipid intermediate I) to form undecaprenyl-pyrophosphoryl-MurNAc-(pentapeptide)GlcNAc (lipid intermediate II). The polypeptide is UDP-N-acetylglucosamine--N-acetylmuramyl-(pentapeptide) pyrophosphoryl-undecaprenol N-acetylglucosamine transferase (Streptomyces avermitilis (strain ATCC 31267 / DSM 46492 / JCM 5070 / NBRC 14893 / NCIMB 12804 / NRRL 8165 / MA-4680)).